A 273-amino-acid polypeptide reads, in one-letter code: Dermonecrotic toxin LapSicTox-alphaIB1c (273 aa).

The active site involves His5. 2 residues coordinate Mg(2+): Glu25 and Asp27. Residue His41 is the Nucleophile of the active site. Cystine bridges form between Cys45/Cys51 and Cys47/Cys190. Asp85 contacts Mg(2+). Asn250 is a glycosylation site (N-linked (GlcNAc...) asparagine).

It belongs to the arthropod phospholipase D family. Class II subfamily. Mg(2+) serves as cofactor. In terms of tissue distribution, expressed by the venom gland.

The protein resides in the secreted. The catalysed reaction is an N-(acyl)-sphingosylphosphocholine = an N-(acyl)-sphingosyl-1,3-cyclic phosphate + choline. The enzyme catalyses an N-(acyl)-sphingosylphosphoethanolamine = an N-(acyl)-sphingosyl-1,3-cyclic phosphate + ethanolamine. It catalyses the reaction a 1-acyl-sn-glycero-3-phosphocholine = a 1-acyl-sn-glycero-2,3-cyclic phosphate + choline. It carries out the reaction a 1-acyl-sn-glycero-3-phosphoethanolamine = a 1-acyl-sn-glycero-2,3-cyclic phosphate + ethanolamine. Dermonecrotic toxins cleave the phosphodiester linkage between the phosphate and headgroup of certain phospholipids (sphingolipid and lysolipid substrates), forming an alcohol (often choline) and a cyclic phosphate. This toxin acts on sphingomyelin (SM). It may also act on ceramide phosphoethanolamine (CPE), lysophosphatidylcholine (LPC) and lysophosphatidylethanolamine (LPE), but not on lysophosphatidylserine (LPS), and lysophosphatidylglycerol (LPG). It acts by transphosphatidylation, releasing exclusively cyclic phosphate products as second products. Induces dermonecrosis, hemolysis, increased vascular permeability, edema, inflammatory response, and platelet aggregation. The polypeptide is Dermonecrotic toxin LapSicTox-alphaIB1c (Loxosceles apachea (Apache recluse spider)).